The following is a 697-amino-acid chain: Elongation factor G (697 aa).

The tr-type G domain maps to 8-283 (EHIRNIGICA…AVVDFLPSPT (276 aa)). Residues 17-24 (AHIDAGKT), 81-85 (DTPGH), and 135-138 (NKMD) contribute to the GTP site.

This sequence belongs to the TRAFAC class translation factor GTPase superfamily. Classic translation factor GTPase family. EF-G/EF-2 subfamily.

The protein localises to the cytoplasm. Its function is as follows. Catalyzes the GTP-dependent ribosomal translocation step during translation elongation. During this step, the ribosome changes from the pre-translocational (PRE) to the post-translocational (POST) state as the newly formed A-site-bound peptidyl-tRNA and P-site-bound deacylated tRNA move to the P and E sites, respectively. Catalyzes the coordinated movement of the two tRNA molecules, the mRNA and conformational changes in the ribosome. The protein is Elongation factor G of Rickettsia rhipicephali.